We begin with the raw amino-acid sequence, 170 residues long: Lipocalin Cav p 2.0101 (170 aa).

The N-terminal stretch at 1–16 (MMQILLLALAVSLACA) is a signal peptide. 2 disulfides stabilise this stretch: Cys-56–Cys-60 and Cys-75–Cys-168.

The protein belongs to the calycin superfamily. Lipocalin family. Not N-linked glycosylated. Expressed in harderian gland (at protein level). Expressed in hair (at protein level). Expressed in submaxillary gland and harderian gland.

The protein localises to the secreted. In Cavia porcellus (Guinea pig), this protein is Lipocalin Cav p 2.0101 (Lcncavp2).